A 362-amino-acid chain; its full sequence is Spermidine/putrescine import ATP-binding protein PotA (362 aa).

One can recognise an ABC transporter domain in the interval 6–236 (VELKHVGKRY…PVNHFVADFI (231 aa)). 38–45 (GPSGSGKT) contacts ATP.

The protein belongs to the ABC transporter superfamily. Spermidine/putrescine importer (TC 3.A.1.11.1) family. The complex is composed of two ATP-binding proteins (PotA), two transmembrane proteins (PotB and PotC) and a solute-binding protein (PotD).

It is found in the cell membrane. The catalysed reaction is ATP + H2O + polyamine-[polyamine-binding protein]Side 1 = ADP + phosphate + polyamineSide 2 + [polyamine-binding protein]Side 1.. Part of the ABC transporter complex PotABCD involved in spermidine/putrescine import. Responsible for energy coupling to the transport system. In Lacticaseibacillus paracasei (strain ATCC 334 / BCRC 17002 / CCUG 31169 / CIP 107868 / KCTC 3260 / NRRL B-441) (Lactobacillus paracasei), this protein is Spermidine/putrescine import ATP-binding protein PotA.